The sequence spans 208 residues: Probable GTP-binding protein EngB (208 aa).

The 170-residue stretch at 18–187 (KQFEICVIGR…FALMKKVVIE (170 aa)) folds into the EngB-type G domain. Residues 26 to 33 (GRSNVGKS), 52 to 56 (GRTQL), 69 to 72 (DLPG), 135 to 138 (NKVD), and 166 to 168 (VSA) contribute to the GTP site. Positions 33 and 54 each coordinate Mg(2+).

It belongs to the TRAFAC class TrmE-Era-EngA-EngB-Septin-like GTPase superfamily. EngB GTPase family. The cofactor is Mg(2+).

Functionally, necessary for normal cell division and for the maintenance of normal septation. The chain is Probable GTP-binding protein EngB from Ureaplasma urealyticum serovar 10 (strain ATCC 33699 / Western).